The following is a 364-amino-acid chain: 3-isopropylmalate dehydrogenase (364 aa).

Residue G78–E91 coordinates NAD(+). R99, R109, R138, and D228 together coordinate substrate. The Mg(2+) site is built by D228, D252, and D256. G286–N298 provides a ligand contact to NAD(+).

This sequence belongs to the isocitrate and isopropylmalate dehydrogenases family. LeuB type 1 subfamily. In terms of assembly, homodimer. Mg(2+) serves as cofactor. Mn(2+) is required as a cofactor.

Its subcellular location is the cytoplasm. The catalysed reaction is (2R,3S)-3-isopropylmalate + NAD(+) = 4-methyl-2-oxopentanoate + CO2 + NADH. Its pathway is amino-acid biosynthesis; L-leucine biosynthesis; L-leucine from 3-methyl-2-oxobutanoate: step 3/4. Catalyzes the oxidation of 3-carboxy-2-hydroxy-4-methylpentanoate (3-isopropylmalate) to 3-carboxy-4-methyl-2-oxopentanoate. The product decarboxylates to 4-methyl-2 oxopentanoate. The sequence is that of 3-isopropylmalate dehydrogenase from Buchnera aphidicola subsp. Uroleucon obscurum.